The following is a 1077-amino-acid chain: Receptor-like protein 1 (1077 aa).

Positions 1–38 are cleaved as a signal peptide; that stretch reads MRTDERRRWWVKPKKHITLVFITITMIIQFQMKGCVSC. The segment at 39–120 is N-cap; that stretch reads VETERMGLLQ…SQTRSLNLSL (82 aa). Topologically, residues 39 to 1024 are extracellular; that stretch reads VETERMGLLQ…NEEEGNVIDM (986 aa). N117, N131, and N139 each carry an N-linked (GlcNAc...) asparagine glycan. LRR repeat units lie at residues 124-147, 153-176, 177-201, 202-225, 227-250, 251-274, 275-299, 300-324, 326-348, 351-376, 378-397, and 399-424; these read FPQL…FLGF, LDKL…FLNA, ATSI…ELSN, MTNL…GLTD, RDLE…SLST, AKLK…GLES, LQEL…VLKD, LKML…GLEI, TSLQ…YLGI, LMKL…NLTH, RTLD…FVSG, and PSVL…LVNQ. N201 carries an N-linked (GlcNAc...) asparagine glycan. N240 carries N-linked (GlcNAc...) asparagine glycosylation. N-linked (GlcNAc...) asparagine glycosylation is present at N289. Residues N373, N390, and N423 are each glycosylated (N-linked (GlcNAc...) asparagine). An LRR 13; degenerate repeat occupies 425 to 449; that stretch reads TRLTVFKLSSKVGVIQVQTESSWAP. LRR repeat units lie at residues 450 to 473, 474 to 498, 499 to 522, 524 to 545, 546 to 570, 572 to 594, 595 to 621, 623 to 643, 644 to 666, 667 to 694, 696 to 713, 714 to 737, 739 to 761, 762 to 785, 786 to 808, 877 to 901, 902 to 925, 927 to 949, and 951 to 970; these read LFQL…FLVH, QRDL…LVKN, NTRL…ILVH, LQVL…IGMV, FPNL…IGEM, SLQV…FLSG, CYSL…NLTG, VGLF…LLKS, KNLT…WIGR, ISRL…PWVE, MDIS…NVNF, PSLR…LFKA, GLEV…IDQT, SKLR…ICQL, SEVG…CFSK, LRYM…IGDL, QNIR…ISKL, GLES…LADL, and SLGY…PFKG. N-linked (GlcNAc...) asparagine glycans are attached at residues N460 and N498. N553 carries an N-linked (GlcNAc...) asparagine glycan. N618, N631, and N645 each carry an N-linked (GlcNAc...) asparagine glycan. N-linked (GlcNAc...) asparagine glycans are attached at residues N749 and N771. The N-linked (GlcNAc...) asparagine glycan is linked to N908. N-linked (GlcNAc...) asparagine glycosylation is found at N956 and N961. The tract at residues 971-1024 is C-cap/acidic domain; that stretch reads HLVTFDERSYIGNAHLCGLPTNKNCISQRVPEPPSVSTHAKEEENEEEGNVIDM. Residues 1025-1045 traverse the membrane as a helical segment; sequence VWFYWTCAAVYISTSLALFAF. Over 1046-1077 the chain is Cytoplasmic; the sequence is LYIDSRWSREWFYRVDLCVHHILQFKRSSVCN.

It belongs to the RLP family.

Its subcellular location is the cell membrane. In terms of biological role, involved in plant defense. Confers resistance to the bacterial pathogen Xanthomonas through recognition of the microbe-associated molecular pattern (MAMP) eMax. Functionality seems to depend on the presence of the receptor kinase SOBIR1 as an adapter protein. This Arabidopsis thaliana (Mouse-ear cress) protein is Receptor-like protein 1.